Here is a 255-residue protein sequence, read N- to C-terminus: Thiazole synthase (255 aa).

K96 acts as the Schiff-base intermediate with DXP in catalysis. 1-deoxy-D-xylulose 5-phosphate is bound by residues G157, 183–184 (AG), and 205–206 (NT).

Belongs to the ThiG family. Homotetramer. Forms heterodimers with either ThiH or ThiS.

Its subcellular location is the cytoplasm. It carries out the reaction [ThiS sulfur-carrier protein]-C-terminal-Gly-aminoethanethioate + 2-iminoacetate + 1-deoxy-D-xylulose 5-phosphate = [ThiS sulfur-carrier protein]-C-terminal Gly-Gly + 2-[(2R,5Z)-2-carboxy-4-methylthiazol-5(2H)-ylidene]ethyl phosphate + 2 H2O + H(+). It participates in cofactor biosynthesis; thiamine diphosphate biosynthesis. Functionally, catalyzes the rearrangement of 1-deoxy-D-xylulose 5-phosphate (DXP) to produce the thiazole phosphate moiety of thiamine. Sulfur is provided by the thiocarboxylate moiety of the carrier protein ThiS. In vitro, sulfur can be provided by H(2)S. This chain is Thiazole synthase, found in Staphylococcus haemolyticus (strain JCSC1435).